The sequence spans 429 residues: Ribosomal RNA small subunit methyltransferase B (429 aa).

Residues 254-260 (CAAPGGK), Asp-277, Asp-303, and Asp-322 each bind S-adenosyl-L-methionine. The Nucleophile role is filled by Cys-375.

It belongs to the class I-like SAM-binding methyltransferase superfamily. RsmB/NOP family.

Its subcellular location is the cytoplasm. The catalysed reaction is cytidine(967) in 16S rRNA + S-adenosyl-L-methionine = 5-methylcytidine(967) in 16S rRNA + S-adenosyl-L-homocysteine + H(+). In terms of biological role, specifically methylates the cytosine at position 967 (m5C967) of 16S rRNA. The sequence is that of Ribosomal RNA small subunit methyltransferase B from Salmonella arizonae (strain ATCC BAA-731 / CDC346-86 / RSK2980).